The chain runs to 895 residues: Procollagen lysyl hydroxylase and glycosyltransferase (895 aa).

A lysyl hydroxylase region region spans residues 1-194 (MISRTYVINL…PSDEFIPIMH (194 aa)). The glucosyl transferase region stretch occupies residues 537-895 (YYFYISGDCI…KRYILVSFVN (359 aa)). In terms of domain architecture, Fe2OG dioxygenase spans 805-895 (DINLAFVVKY…KRYILVSFVN (91 aa)). Fe cation-binding residues include histidine 825, aspartate 827, and histidine 877. Arginine 887 is an active-site residue.

Requires Fe cation as cofactor. The cofactor is L-ascorbate.

The catalysed reaction is L-lysyl-[collagen] + 2-oxoglutarate + O2 = (5R)-5-hydroxy-L-lysyl-[collagen] + succinate + CO2. Functionally, displays two enzymatic activities involved in procollagen processing. Forms hydroxylysine residues in -Xaa-Lys-Gly- sequences in collagens. These hydroxylysines are subsequentially glucosylated by a glucosyltransferase activity. Collagen post-translationally modified is detected in mimivirus virion. In Acanthamoeba polyphaga (Amoeba), this protein is Procollagen lysyl hydroxylase and glycosyltransferase.